Consider the following 84-residue polypeptide: MKVSVLITLAVLGVMFLLTSAEERGSDQMDSPAWLKSMERIFQSEERECRWLFGGCEKDSDCCEHLGCRRAKPSWCGWDFTFGK.

The signal sequence occupies residues 1–21; sequence MKVSVLITLAVLGVMFLLTSA. Residues 22–47 constitute a propeptide that is removed on maturation; sequence EERGSDQMDSPAWLKSMERIFQSEER. Cystine bridges form between C49–C63, C56–C68, and C62–C76. F82 is modified (phenylalanine amide).

Belongs to the neurotoxin 10 (Hwtx-1) family. 05 (F4a) subfamily. In terms of tissue distribution, expressed by the venom gland.

Its subcellular location is the secreted. Probable ion channel inhibitor. This Chilobrachys guangxiensis (Chinese earth tiger tarantula) protein is U21-theraphotoxin-Cg1b.